Here is a 119-residue protein sequence, read N- to C-terminus: uncharacterized protein (119 aa).

2 helical membrane-spanning segments follow: residues 19–39 and 68–88; these read FYPS…PSFL and FPWF…PWLL.

It is found in the membrane. This is an uncharacterized protein from Saccharomyces cerevisiae (strain ATCC 204508 / S288c) (Baker's yeast).